The sequence spans 218 residues: Pyrrolidone-carboxylate peptidase (218 aa).

Catalysis depends on residues Glu-81, Cys-144, and His-169.

This sequence belongs to the peptidase C15 family. Homotetramer.

The protein localises to the cytoplasm. It catalyses the reaction Release of an N-terminal pyroglutamyl group from a polypeptide, the second amino acid generally not being Pro.. Its function is as follows. Removes 5-oxoproline from various penultimate amino acid residues except L-proline. In Deinococcus radiodurans (strain ATCC 13939 / DSM 20539 / JCM 16871 / CCUG 27074 / LMG 4051 / NBRC 15346 / NCIMB 9279 / VKM B-1422 / R1), this protein is Pyrrolidone-carboxylate peptidase (pcp).